The sequence spans 202 residues: Glycolipid transfer protein 1 (202 aa).

Residues Asp-52, Asn-56, Trp-99, and His-138 each contribute to the a ganglioside GM3 (d18:1(4E)) site.

It belongs to the GLTP family.

Functionally, may be involved in glycolipids transfer. The chain is Glycolipid transfer protein 1 from Arabidopsis thaliana (Mouse-ear cress).